The chain runs to 182 residues: Ribosome maturation factor RimM (182 aa).

The PRC barrel domain maps to Glu102–Phe182.

Belongs to the RimM family. In terms of assembly, binds ribosomal protein uS19.

Its subcellular location is the cytoplasm. Its function is as follows. An accessory protein needed during the final step in the assembly of 30S ribosomal subunit, possibly for assembly of the head region. Essential for efficient processing of 16S rRNA. May be needed both before and after RbfA during the maturation of 16S rRNA. It has affinity for free ribosomal 30S subunits but not for 70S ribosomes. This Klebsiella pneumoniae (strain 342) protein is Ribosome maturation factor RimM.